The sequence spans 469 residues: NADH-quinone oxidoreductase subunit N (469 aa).

The next 14 membrane-spanning stretches (helical) occupy residues 9–29 (PLLM…LIAG), 40–60 (VGVM…VQMV), 76–96 (ATGV…AVAG), 105–125 (EAET…LAGA), 128–148 (LLLL…LVGL), 162–182 (YLMG…LYGL), 201–221 (VAVA…AGGV), 234–254 (ANAT…LVAL), 265–285 (LAWP…GNLA), 294–316 (RLLG…VAGA), 327–347 (YLGG…ALPG), 365–385 (AAAL…AVFI), 402–422 (LAVV…RWII), and 448–468 (VLAA…WQLV).

Belongs to the complex I subunit 2 family. In terms of assembly, NDH-1 is composed of 14 different subunits. Subunits NuoA, H, J, K, L, M, N constitute the membrane sector of the complex.

It is found in the cell membrane. It catalyses the reaction a quinone + NADH + 5 H(+)(in) = a quinol + NAD(+) + 4 H(+)(out). Its function is as follows. NDH-1 shuttles electrons from NADH, via FMN and iron-sulfur (Fe-S) centers, to quinones in the respiratory chain. The immediate electron acceptor for the enzyme in this species is believed to be a menaquinone. Couples the redox reaction to proton translocation (for every two electrons transferred, four hydrogen ions are translocated across the cytoplasmic membrane), and thus conserves the redox energy in a proton gradient. This chain is NADH-quinone oxidoreductase subunit N, found in Mycobacterium sp. (strain JLS).